A 634-amino-acid chain; its full sequence is DNA-directed RNA polymerase subunit gamma (634 aa).

Residues C74, C76, C89, and C92 each contribute to the Zn(2+) site. Mg(2+) is bound by residues D471, D473, and D475.

Belongs to the RNA polymerase beta' chain family. RpoC1 subfamily. In cyanobacteria the RNAP catalytic core is composed of 2 alpha, 1 beta, 1 beta', 1 gamma and 1 omega subunit. When a sigma factor is associated with the core the holoenzyme is formed, which can initiate transcription. Mg(2+) serves as cofactor. It depends on Zn(2+) as a cofactor.

It catalyses the reaction RNA(n) + a ribonucleoside 5'-triphosphate = RNA(n+1) + diphosphate. Functionally, DNA-dependent RNA polymerase catalyzes the transcription of DNA into RNA using the four ribonucleoside triphosphates as substrates. The chain is DNA-directed RNA polymerase subunit gamma from Synechococcus sp. (strain WH7803).